Consider the following 665-residue polypeptide: MAAGGAEGGPGPSAAMGDCAEIKSQFRTREGFYKLLPGDATRRSGPTSAQTPAPPQPTQPPPGPAAASGPGAAGPASSPPPAGPGPGPALPAVRLSLVRLGDPDGAGEPPSTPSGLGAGGDRVCFNLGRELYFYPGCCRSGSQRSIDLNKPIDKRIYKGTQPTCHDFNQFTAATETISLLVGFSAGQVQYLDLIKKDTSKLFNEERLIDKTKVTYLKWLPESESLFLASHASGHLYLYNVSHPCTSTPPQYSLLKQGEGFAVYAAKSKAPRNPLAKWAVGEGPLNEFAFSPDGRHLACVSQDGCLRVFHFDSMLLRGLMKSYFGGLLCVCWSPDGRYVVTGGEDDLVTVWSFTEGRVVARGHGHKSWVNAVAFDPYTTRAEEAASASADGDPSGEEEEPEVTSSDTGAPVSPLPKAGSITYRFGSAGQDTQFCLWDLTEDVLSPHPSLARTRTLPGTPGATPPASGSSRAGETGAGPLPRSLSRSNSLPHPAGGGKAGGPSASMEPGIPFSIGRFATLTLQERRDRGAEKEHKRYHSLGNISRGGSGGNSSNDKLSGPAPRSRLDPAKVLGTALCPRIHEVPLLEPLVCKKIAQERLTVLLFLEDCIITACQEGLICTWARPGKAFTDEETEAQAGQASWPRSPSKSVVEGISSQPGSSPSGTVV.

The span at 1–11 (MAAGGAEGGPG) shows a compositional bias: gly residues. 2 disordered regions span residues 1–91 (MAAG…PALP) and 100–119 (LGDP…LGAG). An N-acetylalanine modification is found at Ala-2. The span at 52–64 (PAPPQPTQPPPGP) shows a compositional bias: pro residues. Over residues 65 to 76 (AAASGPGAAGPA) the composition is skewed to low complexity. Over residues 77 to 89 (SSPPPAGPGPGPA) the composition is skewed to pro residues. 4 WD repeats span residues 208–248 (IDKT…TSTP), 279–318 (VGEG…LRGL), 321–360 (SYFG…VVAR), and 363–445 (GHKS…LSPH). Disordered regions lie at residues 380–413 (AEEA…VSPL), 446–506 (PSLA…SMEP), 524–564 (RDRG…RSRL), and 628–665 (DEET…GTVV). A compositionally biased stretch (low complexity) spans 450–491 (RTRTLPGTPGATPPASGSSRAGETGAGPLPRSLSRSNSLPHP). Ser-487 is modified (phosphoserine). The residue at position 543 (Arg-543) is an Omega-N-methylarginine. A WD 5 repeat occupies 592–629 (IAQERLTVLLFLEDCIITACQEGLICTWARPGKAFTDE). Residues 634–646 (QAGQASWPRSPSK) are compositionally biased toward polar residues. Low complexity predominate over residues 653–665 (SSQPGSSPSGTVV).

As to quaternary structure, component of the USP12/DMWD/WDR48 deubiquitinating complex. Interacts with USP12; promotes its enzymatic activity. Interacts with USP46. As to expression, widely expressed in brain where it localizes to the olfactory bulb, forebrain, thalamus, hippocampus, cerebellum, cortex and hypothalamus (at protein level). Expression seems to be particularly strong in areas of high synaptic density such as the glomerular layer of the olfactory bulb, and mossy fiber terminal fields of the hippocampus (at protein level). Expressed in retina, with strongest expression in the external and internal plexiform layers (at protein level). Strongly expressed in brain and testis. Also detected at lower levels in heart, kidney, liver, lung, ovary, uterus, bladder and skeletal muscle. In testis, expression seems to be restricted to secondary spermatocytes.

The protein resides in the cytoplasm. It is found in the nucleus. Its subcellular location is the perikaryon. The protein localises to the cell projection. It localises to the dendrite. In terms of biological role, regulator of the deubiquitinating USP12/DMWD/WDR48 complex. Functions as a cofactor that promotes USP12 enzymatic activity. The protein is Dystrophia myotonica WD repeat-containing protein (Dmwd) of Mus musculus (Mouse).